The chain runs to 144 residues: Transcription antitermination protein NusB (144 aa).

It belongs to the NusB family.

Functionally, involved in transcription antitermination. Required for transcription of ribosomal RNA (rRNA) genes. Binds specifically to the boxA antiterminator sequence of the ribosomal RNA (rrn) operons. This is Transcription antitermination protein NusB from Buchnera aphidicola subsp. Baizongia pistaciae (strain Bp).